The sequence spans 511 residues: Putative CBL-interacting protein kinase 13 (511 aa).

The Protein kinase domain occupies 25–279 (FEVGKLLGQG…AEGIMENEWF (255 aa)). ATP-binding positions include 31–39 (LGQGNFAKV) and Lys54. Catalysis depends on Asp147, which acts as the Proton acceptor. The activation loop stretch occupies residues 165–194 (DFGLSAVADGMRRDGLFHTFCGTPAYVAPE). The disordered stretch occupies residues 307-340 (VDAPTSPPDTPRTVDSGDVGAAPTRPRKAGSLTS). Positions 321–383 (DSGDVGAAPT…PGFDLSGLFD (63 aa)) constitute an NAF domain. Positions 400–429 (KHTARFVSAAPVEVIVATLEAAAAAAGMAV) are PPI.

Belongs to the protein kinase superfamily. CAMK Ser/Thr protein kinase family. SNF1 subfamily. Requires Mn(2+) as cofactor.

It carries out the reaction L-seryl-[protein] + ATP = O-phospho-L-seryl-[protein] + ADP + H(+). The enzyme catalyses L-threonyl-[protein] + ATP = O-phospho-L-threonyl-[protein] + ADP + H(+). CIPK serine-threonine protein kinases interact with CBL proteins. Binding of a CBL protein to the regulatory NAF domain of CIPK protein lead to the activation of the kinase in a calcium-dependent manner. The chain is Putative CBL-interacting protein kinase 13 (CIPK13) from Oryza sativa subsp. japonica (Rice).